The chain runs to 858 residues: Leucine--tRNA ligase (858 aa).

A 'HIGH' region motif is present at residues 42-52; the sequence is PYPSGRLHMGH. The 'KMSKS' region signature appears at 618-622; sequence KMSKS. K621 is an ATP binding site.

This sequence belongs to the class-I aminoacyl-tRNA synthetase family.

It localises to the cytoplasm. It catalyses the reaction tRNA(Leu) + L-leucine + ATP = L-leucyl-tRNA(Leu) + AMP + diphosphate. The polypeptide is Leucine--tRNA ligase (Aliivibrio fischeri (strain ATCC 700601 / ES114) (Vibrio fischeri)).